Here is a 506-residue protein sequence, read N- to C-terminus: Steroid (22S)-hydroxylase (506 aa).

A helical membrane pass occupies residues 12–32 (LLFFLPFILLALLTFYTTTVA). Residue Cys-449 participates in heme binding.

This sequence belongs to the cytochrome P450 family. Heme serves as cofactor. Highly expressed in roots and leaf blades. Expressed in shoot apex, stems, leaf sheaths, inflorescences and flowers.

It is found in the membrane. It carries out the reaction a C28-steroid + reduced [NADPH--hemoprotein reductase] + O2 = a (22S)-22-hydroxy C28-steroid + oxidized [NADPH--hemoprotein reductase] + H2O + H(+). The enzyme catalyses campesterol + reduced [NADPH--hemoprotein reductase] + O2 = (22S)-22-hydroxycampesterol + oxidized [NADPH--hemoprotein reductase] + H2O + H(+). It catalyses the reaction campestanol + reduced [NADPH--hemoprotein reductase] + O2 = 6-deoxycathasterone + oxidized [NADPH--hemoprotein reductase] + H2O + H(+). It participates in plant hormone biosynthesis; brassinosteroid biosynthesis. Its function is as follows. Catalyzes the C22-alpha-hydroxylation step in brassinosteroid biosynthesis, which is the rate-limiting step in this biosynthetic pathway. Catalyzes the conversion of campesterol (CR) to (22S)-22-hydroxycampesterol (22-OHCR, 22-hydroxyCR) and of campestanol (CN) to 6-deoxycathasterone (6-deoxoCT). Required for auxin responses involved in the regulation of epidermal cells length of the lamina joint. This is Steroid (22S)-hydroxylase from Oryza sativa subsp. japonica (Rice).